Consider the following 243-residue polypeptide: DNA repair protein RecO (243 aa).

This sequence belongs to the RecO family.

Its function is as follows. Involved in DNA repair and RecF pathway recombination. The sequence is that of DNA repair protein RecO from Bartonella quintana (strain Toulouse) (Rochalimaea quintana).